The following is a 1341-amino-acid chain: DNA-directed RNA polymerase subunit beta (1341 aa).

Belongs to the RNA polymerase beta chain family. The RNAP catalytic core consists of 2 alpha, 1 beta, 1 beta' and 1 omega subunit. When a sigma factor is associated with the core the holoenzyme is formed, which can initiate transcription.

It carries out the reaction RNA(n) + a ribonucleoside 5'-triphosphate = RNA(n+1) + diphosphate. Its function is as follows. DNA-dependent RNA polymerase catalyzes the transcription of DNA into RNA using the four ribonucleoside triphosphates as substrates. This chain is DNA-directed RNA polymerase subunit beta, found in Photobacterium profundum (strain SS9).